A 235-amino-acid chain; its full sequence is MNSATTMSASVLNYQILKFFPPQKNGFLKSPLIRGKICRFCVSASSNELNKQVIEDPKEETQEKSDGVIVNSTEEEEERSGENSTSTGPSTVLDNKELKKAVLKTASTFAPRASTATKNPAKPGTVLYTVFEVQAYASMLIGGALSFNLIFPSTEPDIWRLMGMWSIWMFTIPSLRARDCSKDEKEALNYLFLLVPLLNVAIPFFLKSFAVVWSADTVAFLGMYAWKLGWLQKER.

The transit peptide at 1 to 43 (MNSATTMSASVLNYQILKFFPPQKNGFLKSPLIRGKICRFCVS) directs the protein to the chloroplast. Positions 53–66 (VIEDPKEETQEKSD) are enriched in basic and acidic residues. The interval 53–92 (VIEDPKEETQEKSDGVIVNSTEEEEERSGENSTSTGPSTV) is disordered. The next 4 helical transmembrane spans lie at 131–151 (FEVQAYASMLIGGALSFNLIF), 158–178 (IWRLMGMWSIWMFTIPSLRAR), 188–208 (LNYLFLLVPLLNVAIPFFLKS), and 211–231 (VVWSADTVAFLGMYAWKLGWL).

Its subcellular location is the plastid. It is found in the chloroplast. It localises to the membrane. In terms of biological role, plays a positive role in the immune response to the oomycetes P.infestans, including induced oxidative burst and enhanced expression of defense-related genes. This is Protein RESISTANCE TO PHYTOPHTHORA 1, chloroplastic from Solanum tuberosum (Potato).